Here is a 177-residue protein sequence, read N- to C-terminus: NADH-quinone oxidoreductase subunit B (177 aa).

[4Fe-4S] cluster-binding residues include Cys56, Cys57, Cys121, and Cys151.

This sequence belongs to the complex I 20 kDa subunit family. NDH-1 is composed of 14 different subunits. Subunits NuoB, C, D, E, F, and G constitute the peripheral sector of the complex. [4Fe-4S] cluster serves as cofactor.

The protein localises to the cell inner membrane. The enzyme catalyses a quinone + NADH + 5 H(+)(in) = a quinol + NAD(+) + 4 H(+)(out). Its function is as follows. NDH-1 shuttles electrons from NADH, via FMN and iron-sulfur (Fe-S) centers, to quinones in the respiratory chain. Couples the redox reaction to proton translocation (for every two electrons transferred, four hydrogen ions are translocated across the cytoplasmic membrane), and thus conserves the redox energy in a proton gradient. The sequence is that of NADH-quinone oxidoreductase subunit B from Ruegeria pomeroyi (strain ATCC 700808 / DSM 15171 / DSS-3) (Silicibacter pomeroyi).